A 660-amino-acid polypeptide reads, in one-letter code: DNA ligase (660 aa).

NAD(+) contacts are provided by residues 31 to 35 (DKEYD), 79 to 80 (SL), and glutamate 111. Lysine 113 functions as the N6-AMP-lysine intermediate in the catalytic mechanism. Arginine 134, glutamate 168, lysine 280, and lysine 304 together coordinate NAD(+). Residues cysteine 397, cysteine 400, cysteine 413, and cysteine 419 each contribute to the Zn(2+) site. Positions 577–660 (RQESIFSGKT…LDEAAFEALL (84 aa)) constitute a BRCT domain.

Belongs to the NAD-dependent DNA ligase family. LigA subfamily. Mg(2+) serves as cofactor. The cofactor is Mn(2+).

It carries out the reaction NAD(+) + (deoxyribonucleotide)n-3'-hydroxyl + 5'-phospho-(deoxyribonucleotide)m = (deoxyribonucleotide)n+m + AMP + beta-nicotinamide D-nucleotide.. Its function is as follows. DNA ligase that catalyzes the formation of phosphodiester linkages between 5'-phosphoryl and 3'-hydroxyl groups in double-stranded DNA using NAD as a coenzyme and as the energy source for the reaction. It is essential for DNA replication and repair of damaged DNA. This Alkaliphilus metalliredigens (strain QYMF) protein is DNA ligase.